The following is a 406-amino-acid chain: Glutamyl-tRNA reductase (406 aa).

Residues 49 to 52 (TCHR), serine 107, 112 to 114 (EPQ), and glutamine 118 each bind substrate. Catalysis depends on cysteine 50, which acts as the Nucleophile. Residue 187–192 (GAGETG) coordinates NADP(+).

Belongs to the glutamyl-tRNA reductase family. In terms of assembly, homodimer.

The enzyme catalyses (S)-4-amino-5-oxopentanoate + tRNA(Glu) + NADP(+) = L-glutamyl-tRNA(Glu) + NADPH + H(+). The protein operates within porphyrin-containing compound metabolism; protoporphyrin-IX biosynthesis; 5-aminolevulinate from L-glutamyl-tRNA(Glu): step 1/2. Catalyzes the NADPH-dependent reduction of glutamyl-tRNA(Glu) to glutamate 1-semialdehyde (GSA). The sequence is that of Glutamyl-tRNA reductase from Thermomicrobium roseum (strain ATCC 27502 / DSM 5159 / P-2).